Reading from the N-terminus, the 251-residue chain is MDGYSSKKPRSASPSRSSLTEVEEEERDTLLKTVSLEEEDKSGENGPRKLRRSRFLYAIGILMLSNIAFIAAFLTVFVQKRALEPARLPPWAPPERYESRVFKYMDVYGGEPGPKSEEAWTNLIPKGKGWIKVHNETAIPDMPGLDQSLPEQSALVSVFHQLHCLYMTRAGYFAARSGNLDEVNVVHVSHCWDYLRQAIMCHSDTTLEWLHAPPDNFGSTGWGYEHQCRDYEAIFAFATEHRAGERQVIHG.

Residues 1-47 form a disordered region; that stretch reads MDGYSSKKPRSASPSRSSLTEVEEEERDTLLKTVSLEEEDKSGENGP. A helical membrane pass occupies residues 58–78; that stretch reads AIGILMLSNIAFIAAFLTVFV. An N-linked (GlcNAc...) asparagine glycan is attached at asparagine 135. 2 consecutive short sequence motifs (HXXHC) follow at residues 160 to 164 and 187 to 191; these read HQLHC and HVSHC.

The protein belongs to the ustYa family.

The protein resides in the membrane. It participates in mycotoxin biosynthesis. In terms of biological role, ustYa family oxidase; part of the gene cluster that mediates the biosynthesis of the phomopsins, a group of hexapeptide mycotoxins which infects lupins and causes lupinosis disease in livestock. Within the pathway, phomYb is probably involved in the construction of the macrocyclic structure of the phomopsins. The pathway starts with the processing of the precursor phomA by several endopeptidases including kexin proteases as well as the cluster-specific S41 family peptidase phomP1 and the oligopeptidase phomG to produce 10 identical copies of the hexapeptide Tyr-Val-Ile-Pro-Ile-Asp. After being excised from the precursor peptide, the core peptides are cyclized and modified post-translationally by enzymes encoded within the gene cluster. The timing and order of proteolysis of the phomA precursor and PTMs are still unknown. Two tyrosinase-like enzymes, phomQ1 and phomQ2, catalyze the chlorination and hydroxylation of Tyr, respectively. PhomYb, is proposed to be involved in the construction of the macrocyclic structure. The other 4 ustYa family proteins may be involved in PTMs that generate the unique structure of phomopsin A. PhomYa is required for the hydroxylation of C-beta of Tyr. PhomYc, phomYd, and phomYe are responsible for the biosynthesis of 2,3-dehydroisoleucine (dIle), 2,3-dehydroaspartic acid (dAsp), and 3,4-dehydroproline (dPro), respectively. While dIle formation by phomYc is indispensable for the installation of dAsp by phomYd, the order of the other PTMs have not been elucidated yet. Most of the biosynthetic enzymes likely have broad substrate specificity, and thus, there might be a metabolic grid from a precursor to phomopsin A. The enzyme(s) responsible for the biosynthesis of 3,4-dehydrovaline (dVal) have also not been identified yet. Finally, phomM acts as an S-adenosylmethionine-dependent alpha-N-methyltransferase that catalyzes two successive N-methylation reactions, converting N-desmethyl-phomopsin A to phomopsin A and phomopsin A further to an N,N-dimethylated congener called phomopsin E. The polypeptide is UstYa family oxidase phomYb (Diaporthe leptostromiformis (Lupinosis disease fungus)).